A 3159-amino-acid polypeptide reads, in one-letter code: E1A-binding protein p400 (3159 aa).

The span at 1–16 (MHHGTGPQNVQHQLQR) shows a compositional bias: polar residues. Disordered stretches follow at residues 1-65 (MHHG…MNRS), 125-154 (SPLS…RAGA), 212-261 (PGTP…HITT), 282-359 (VLQG…PASP), 545-594 (LMPT…PQLP), 633-658 (QQPN…AQLA), and 684-770 (TRLP…SQDT). The span at 31 to 41 (HPNPPPSPAAP) shows a compositional bias: pro residues. Over residues 42–55 (FAPSASPSAPQSPS) the composition is skewed to low complexity. The residue at position 53 (Ser-53) is a Phosphoserine. Over residues 56-65 (YQIQQLMNRS) the composition is skewed to polar residues. 2 stretches are compositionally biased toward low complexity: residues 125–137 (SPLS…QSPT) and 237–256 (LGPQ…LASP). Phosphoserine is present on Ser-135. A phosphoserine mark is found at Ser-315 and Ser-321. Over residues 558-571 (QAAQLAGQRQSQQQ) the composition is skewed to low complexity. A compositionally biased stretch (polar residues) spans 572-585 (YDPSTGPPVQNAAS). Pro residues-rich tracts occupy residues 637–653 (VPIP…PPSQ) and 689–698 (DPAPPCPRPL). The segment covering 699–711 (PTSSTSSLAPVSG) has biased composition (low complexity). 2 stretches are compositionally biased toward polar residues: residues 725–742 (NRPS…TSRT) and 751–760 (TKPQSPAQNA). Ser-736 and Ser-755 each carry phosphoserine. The segment covering 761 to 770 (TSSQDSSQDT) has biased composition (low complexity). One can recognise an HSA domain in the interval 799-871 (LPKLQEAPRP…EQSRLRRIAA (73 aa)). Disordered stretches follow at residues 915–967 (ELRP…GVVD) and 997–1024 (SSQW…GDRE). Ser-928 and Ser-941 each carry phosphoserine. A Phosphothreonine modification is found at Thr-945. Acidic residues-rich tracts occupy residues 945 to 962 (TDDE…EEAN) and 1008 to 1019 (EDTSGEEDADDC). Residues 951 to 1365 (DEEETIEEEE…NVLSILVRLQ (415 aa)) form an interactions with RUVBL1 and RUVBL2 region. Residue Ser-1011 is modified to Phosphoserine. Residues 1103–1268 (AKLYRKNLNG…WTMVHFLVPG (166 aa)) enclose the Helicase ATP-binding domain. 1116-1123 (DEAGLGKT) serves as a coordination point for ATP. Residues 1219 to 1222 (DEMQ) carry the DEAH box-like motif. The interval 1467–1582 (VQYGQKPEGR…QAPSHAAGQS (116 aa)) is disordered. Lys-1472 bears the N6-acetyllysine mark. 2 stretches are compositionally biased toward low complexity: residues 1481-1498 (PSTH…SAAP) and 1538-1565 (PASA…ASTP). A phosphoserine mark is found at Ser-1547, Ser-1728, and Ser-1732. The disordered stretch occupies residues 1787-1807 (GSLDGRRGKEAGPAHSYTSSS). Residues 1789–1798 (LDGRRGKEAG) show a composition bias toward basic and acidic residues. The region spanning 1899 to 2056 (KLEALAILLQ…GNDYSMAFLT (158 aa)) is the Helicase C-terminal domain. Disordered stretches follow at residues 2119-2144 (KSAQ…PCDE) and 2287-2311 (KERK…GEAV). N6-acetyllysine is present on residues Lys-2349 and Lys-2356. The Myb-like domain maps to 2360–2429 (EPGQDNPEWL…QCRNRYENVI (70 aa)). Disordered regions lie at residues 2524–2602 (KEKK…AQPA) and 2665–2688 (TPGG…GSPA). Residues 2524–2789 (KEKKALADQQ…QQQQQTTTTS (266 aa)) form an interaction with ZNF42 region. Residues 2530 to 2540 (ADQQKAQQPAV) are compositionally biased toward low complexity. Pro residues-rich tracts occupy residues 2541–2563 (AQPP…PLPQ) and 2572–2589 (PAGP…PQTQ). A compositionally biased stretch (low complexity) spans 2590–2602 (PQPVQAPAKAQPA). At Ser-2686 the chain carries Phosphoserine. Residue Thr-2813 is modified to Phosphothreonine. 2 disordered regions span residues 2821-2869 (QKQK…TAPR) and 3115-3159 (APLQ…PPCQ). Pro residues predominate over residues 2828-2843 (PPQPPPPQAQSAPPQP). Residues 2844 to 2866 (TAQVQVQTSQPPQQQSPQLTTVT) show a composition bias toward low complexity. Residues 3129–3140 (PASSDSPSQQPK) are compositionally biased toward polar residues.

The protein belongs to the SNF2/RAD54 helicase family. SWR1 subfamily. As to quaternary structure, component of the NuA4 histone acetyltransferase complex which contains the catalytic subunit KAT5/TIP60 and the subunits EP400, TRRAP/PAF400, BRD8/SMAP, EPC1, DMAP1/DNMAP1, RUVBL1/TIP49, RUVBL2, ING3, actin, ACTL6A/BAF53A, MORF4L1/MRG15, MORF4L2/MRGX, MRGBP, YEATS4/GAS41, VPS72/YL1 and MEAF6. May also participate in the formation of NuA4 related complexes which lack the KAT5/TIP60 catalytic subunit, but which include the SWI/SNF related protein SRCAP. The NuA4 complex interacts with MYC and the adenovirus E1A protein. EP400 interacts with TRRAP, RUVBL1 and RUVBL2. Component of a SWR1-like complex. Interacts with ZNF42. Interacts with PHF5A. Interacts with human cytomegalovirus UL27. Interacts with human adenovirus 5 E1A protein; this interaction stabilizes MYC. Ubiquitously expressed.

It localises to the nucleus. Its function is as follows. Component of the NuA4 histone acetyltransferase complex which is involved in transcriptional activation of select genes principally by acetylation of nucleosomal histones H4 and H2A. This modification may both alter nucleosome - DNA interactions and promote interaction of the modified histones with other proteins which positively regulate transcription. May be required for transcriptional activation of E2F1 and MYC target genes during cellular proliferation. The NuA4 complex ATPase and helicase activities seem to be, at least in part, contributed by the association of RUVBL1 and RUVBL2 with EP400. May regulate ZNF42 transcription activity. Component of a SWR1-like complex that specifically mediates the removal of histone H2A.Z/H2AZ1 from the nucleosome. The protein is E1A-binding protein p400 (EP400) of Homo sapiens (Human).